Here is a 450-residue protein sequence, read N- to C-terminus: tRNA-2-methylthio-N(6)-dimethylallyladenosine synthase (450 aa).

In terms of domain architecture, MTTase N-terminal spans 14–132; that stretch reads GEFFIETWGC…FPNYLNEVKK (119 aa). Residues Cys-23, Cys-59, Cys-93, Cys-169, Cys-173, and Cys-176 each contribute to the [4Fe-4S] cluster site. Residues 155–385 enclose the Radical SAM core domain; the sequence is RKNSMKAFVT…VEVVNEISAK (231 aa). The TRAM domain maps to 388–450; the sequence is KAYEGKIEEV…NSFSLTGEEI (63 aa).

Belongs to the methylthiotransferase family. MiaB subfamily. As to quaternary structure, monomer. [4Fe-4S] cluster serves as cofactor.

The protein resides in the cytoplasm. It carries out the reaction N(6)-dimethylallyladenosine(37) in tRNA + (sulfur carrier)-SH + AH2 + 2 S-adenosyl-L-methionine = 2-methylsulfanyl-N(6)-dimethylallyladenosine(37) in tRNA + (sulfur carrier)-H + 5'-deoxyadenosine + L-methionine + A + S-adenosyl-L-homocysteine + 2 H(+). Functionally, catalyzes the methylthiolation of N6-(dimethylallyl)adenosine (i(6)A), leading to the formation of 2-methylthio-N6-(dimethylallyl)adenosine (ms(2)i(6)A) at position 37 in tRNAs that read codons beginning with uridine. This Clostridium botulinum (strain Loch Maree / Type A3) protein is tRNA-2-methylthio-N(6)-dimethylallyladenosine synthase.